Here is a 351-residue protein sequence, read N- to C-terminus: DNA polymerase IV (351 aa).

The region spanning 4–185 (IIHVDMDCFF…LPLAKIPGVG (182 aa)) is the UmuC domain. Mg(2+) contacts are provided by Asp-8 and Asp-103. Glu-104 is a catalytic residue.

This sequence belongs to the DNA polymerase type-Y family. In terms of assembly, monomer. Requires Mg(2+) as cofactor.

It is found in the cytoplasm. The enzyme catalyses DNA(n) + a 2'-deoxyribonucleoside 5'-triphosphate = DNA(n+1) + diphosphate. Its function is as follows. Poorly processive, error-prone DNA polymerase involved in untargeted mutagenesis. Copies undamaged DNA at stalled replication forks, which arise in vivo from mismatched or misaligned primer ends. These misaligned primers can be extended by PolIV. Exhibits no 3'-5' exonuclease (proofreading) activity. May be involved in translesional synthesis, in conjunction with the beta clamp from PolIII. The sequence is that of DNA polymerase IV from Escherichia coli O157:H7.